We begin with the raw amino-acid sequence, 302 residues long: Sulfate adenylyltransferase subunit 2 (302 aa).

The disordered stretch occupies residues 280 to 302 (RQGRAIDHDQSGSMELKKRQGYF).

The protein belongs to the PAPS reductase family. CysD subfamily. Heterodimer composed of CysD, the smaller subunit, and CysN.

It catalyses the reaction sulfate + ATP + H(+) = adenosine 5'-phosphosulfate + diphosphate. Its pathway is sulfur metabolism; hydrogen sulfide biosynthesis; sulfite from sulfate: step 1/3. In terms of biological role, with CysN forms the ATP sulfurylase (ATPS) that catalyzes the adenylation of sulfate producing adenosine 5'-phosphosulfate (APS) and diphosphate, the first enzymatic step in sulfur assimilation pathway. APS synthesis involves the formation of a high-energy phosphoric-sulfuric acid anhydride bond driven by GTP hydrolysis by CysN coupled to ATP hydrolysis by CysD. In Vibrio cholerae serotype O1 (strain ATCC 39315 / El Tor Inaba N16961), this protein is Sulfate adenylyltransferase subunit 2.